The following is a 235-amino-acid chain: Ubiquinone biosynthesis O-methyltransferase (235 aa).

S-adenosyl-L-methionine contacts are provided by Arg39, Gly59, Asp80, and Met124.

The protein belongs to the methyltransferase superfamily. UbiG/COQ3 family.

It carries out the reaction a 3-demethylubiquinol + S-adenosyl-L-methionine = a ubiquinol + S-adenosyl-L-homocysteine + H(+). The enzyme catalyses a 3-(all-trans-polyprenyl)benzene-1,2-diol + S-adenosyl-L-methionine = a 2-methoxy-6-(all-trans-polyprenyl)phenol + S-adenosyl-L-homocysteine + H(+). Its pathway is cofactor biosynthesis; ubiquinone biosynthesis. Functionally, O-methyltransferase that catalyzes the 2 O-methylation steps in the ubiquinone biosynthetic pathway. The sequence is that of Ubiquinone biosynthesis O-methyltransferase from Vibrio campbellii (strain ATCC BAA-1116).